Here is a 144-residue protein sequence, read N- to C-terminus: Superoxide dismutase [Mn], mitochondrial (144 aa).

Histidine 10, histidine 58, and aspartate 143 together coordinate Mn(2+).

It belongs to the iron/manganese superoxide dismutase family. In terms of assembly, homotetramer. It depends on Mn(2+) as a cofactor.

It is found in the mitochondrion matrix. The enzyme catalyses 2 superoxide + 2 H(+) = H2O2 + O2. Functionally, destroys superoxide anion radicals which are normally produced within the cells and which are toxic to biological systems. The protein is Superoxide dismutase [Mn], mitochondrial of Palinurus vulgaris (European spiny lobster).